The primary structure comprises 1044 residues: Disease resistance protein PIK6-NP (1044 aa).

The tract at residues 3 to 184 (LAVGASEATM…PQIVSIKEPV (182 aa)) is structured coiled coil (CC) domain. Residues 187 to 543 (KTVMENLEKW…IAEGFATEKQ (357 aa)) enclose the NB-ARC domain. A disordered region spans residues 258–302 (QVSKQEEAGGSTESSSRDENTREPQGSSSTSSREENTAESGTKRM). 3 LRR repeats span residues 635-657 (LAQVRSLTVFGNLNHVPFHSFNY), 682-705 (MLVLKYLSIRRTEIAKIPSKIEKL), and 706-728 (EYLETLDIRETYVEELPKSVGQL). Residues 737–771 (GNKNTRKGLRLPQEKRNKAMKNPSPQGKTKEPAEK) form a disordered region. LRR repeat units lie at residues 808–834 (LTGLRKLAIYKLKISEENDTFKELLSS), 840–862 (SCGLQTLAINDENSKFINSLYNM), 866–888 (PRYLVSLELSGKLKWLPEWITSI), 889–911 (TTLNKLTISITVLTTETLEILRN), 935–958 (KGILEDNKLATDGEIVIPAKEFKS), and 980–1004 (MPALEIIEMRFQEFEGLFGIEILEN).

Belongs to the disease resistance NB-LRR family.

Probable disease resistance protein. Resistance proteins guard the plant against pathogens that contain an appropriate avirulence protein via an indirect interaction with this avirulence protein. That triggers a defense system including the hypersensitive response, which restricts the pathogen growth. At the opposite of cultivar Kusabue, the cultivar Nipponbare doesn't recognize the effector avirulence protein AVR-Pik from M.oryzae. This is Disease resistance protein PIK6-NP from Oryza sativa subsp. japonica (Rice).